We begin with the raw amino-acid sequence, 713 residues long: Polyribonucleotide nucleotidyltransferase (713 aa).

2 residues coordinate Mg(2+): Asp494 and Asp500. The 63-residue stretch at Pro561–Val623 folds into the KH domain. Residues Gly633–Lys702 enclose the S1 motif domain.

Belongs to the polyribonucleotide nucleotidyltransferase family. Mg(2+) serves as cofactor.

It localises to the cytoplasm. It carries out the reaction RNA(n+1) + phosphate = RNA(n) + a ribonucleoside 5'-diphosphate. In terms of biological role, involved in mRNA degradation. Catalyzes the phosphorolysis of single-stranded polyribonucleotides processively in the 3'- to 5'-direction. The chain is Polyribonucleotide nucleotidyltransferase from Amoebophilus asiaticus (strain 5a2).